Consider the following 741-residue polypeptide: Eukaryotic translation initiation factor 3 subunit B (741 aa).

Over residues M1–E10 the composition is skewed to polar residues. Residues M1–I21 are disordered. One can recognise an RRM domain in the interval T40–D126. WD repeat units lie at residues A193 to Q230, P232 to V289, A303 to K344, I514 to E557, and V572 to A610. Positions D696 to A723 are disordered.

The protein belongs to the eIF-3 subunit B family. As to quaternary structure, component of the eukaryotic translation initiation factor 3 (eIF-3) complex.

The protein localises to the cytoplasm. In terms of biological role, RNA-binding component of the eukaryotic translation initiation factor 3 (eIF-3) complex, which is involved in protein synthesis of a specialized repertoire of mRNAs and, together with other initiation factors, stimulates binding of mRNA and methionyl-tRNAi to the 40S ribosome. The eIF-3 complex specifically targets and initiates translation of a subset of mRNAs involved in cell proliferation. This is Eukaryotic translation initiation factor 3 subunit B (prt1) from Aspergillus oryzae (strain ATCC 42149 / RIB 40) (Yellow koji mold).